The chain runs to 1959 residues: MEFPIGSVGTTNFRRFTPESLAEIEKQIAAHGAAKKARAKHGERKGQDEKPRPQLDLKACNQLPRFYGELPAELVGEPLEDLDPFYSTHRTFMVLNKGRTISRFSATWALWLFSPFNLIRRTAIKVSVHAWFSIFITITILFNCVCMTQNDLPEKIEYAFTVIYTFEALIKILARGFCLNEFTYLRDPWNWLDFSVITLAYVGAAIDLRGISGLRTFRVLRALKTVSVIPGLKVIVGALIHSVRKLADVTILTVFCLSVFALVGLQLFKGNLKNKCIKRSTDPHNAYNFSSQMADNFYIKNGTTEPLLCGNGSDAGHCPSGYICLKTSDNPDFNYTSFDSFAWAFLSLFRLMTQDSWERLYQQTLRASGKMYMVFFVLVIFLGSFYLVNLILAVVTMAYEEQNQATIAEIEAKEKKFQEALEVLQKEQEVLAALGIDTTSLHSHNGSPLAPKNANERKHRIKSRVSEGSTDDNRSPQSDPYNQRRMSFLGLSSGRRRASHSSVFHFRAPSQDVSFPDGITDDGVFHGDHESHRSSLLLARGAGQAGPLPRSPLASSPNPGPGHREEGQLTAPTGELTTGAPEDLALEAAGQKKNFLSAEYLNEPFRAQRAMSVVSIMTSVIEELEESKLRCPPCLINLAQKYLIWECCPKWMKFKMVLFELVTDPFAELTITLCIVVNTIFMAMEHYPMTDAFDAMLQAGNIVFTVFFTMEMAFKIIAFDPYYYFQKKWNVFDCVIVTVSLLELSIAKKGSLSVLRTFRLLRVFKLAKSWPTLNTLIKIIGNSVGALGNLTFILAIIVFIFALVGKQLLGEDYGCRKDGTALWNEGQLRWHMCDFFHSFLVIFRILCGEWIENMWVCMQVSEKSICLILFLTVMVLGNLVVLNLFIALLLNSFSADNLTAPEDDGEVNNLQVALARTQAFGQRASQAISSYFSSHCRLRWPKVGSQLGVKPSLTSSKAEHHITADAVNTAVGTSAKPALSGPKEDPRDFITDANVWVSVPIAEGESDLDELEEDIEQNSQSSWREESPKGQQDQLWQIQRCEDHQVPNSPGSGMSSEDLASYLGERWKSEATPQVPAEGVDDTSSSEGSTVDCPDPEEILKKIPELADDLEEPDDCFTEGCTRHCPCCKVSTSKFPWTTGWQVRKTCYRIVEHSWFESFIIFMILLSSGALAFEDNYLEQKPRVKSMLEYTDRVFTFIFVFEMLLKWVAYGFKKYFTNAWCWLDFLIVNISLTSLIAKILDYSDVASLKALRTLRALRPLRALSRFEGMRVVVDALVGAIPSIMNVLLVCLIFWLIFSIMGVNLFAGKFSRCIDTSNNPFSVVNSTIVNNKSECRNQNHTGHFFWVNVKVNFDNVAMGYLALLQVATFKGWMDIMYAAVDSREINSQPQWEDNLYMYLYFVVFIIFGGFFTLNLFVGVIIDNFNQQKKKLGGQDIFMTEEQKKYYNAMKKLGSKKPQKPIPRPLNKYQGFVFDIVTRQAFDIIIMVLICLNMITMMVETDGQSEEKTKILGRINQFFVAVFTGECVMKMFALRQYYFTNGWNVFDFIVVILSIGSLVFSAILKSLESYFSPTLFRVIRLARIGRILRLIRAAKGIRTLLFALMMSLPALFNIGLLLFLVMFIYSIFGMASFANVVEEAGIDDMFNFQTFGNSMLCLFQITTSAGWDGLLSPILNTGPPYCDPNLSNNNTSKGNCGSPTVGIVFFTTYIIISFLIVVNMYIAVILENFNVATEESTEPLSEDDFDMFYETWEKFDPEATQFIAFSALSDFADTLSGPLRIPKPNQNILIQMDLPLVPGDKIHCLDILFAFTKNVLGESGELDSLKTNMEEKFMATNLSKASYEPIATTLRWKQEDISATVIQKAYRSYVLQRSLTLSNPLRVPRAEDDDAPLPGEGYVTFMANDSGRLPDKSETTSATSFPPSYDSVTRGLSDRVNISTSNSMHNEDEVTSKEGDSPGPQ.

Residues 1 to 125 lie on the Cytoplasmic side of the membrane; that stretch reads MEFPIGSVGT…FNLIRRTAIK (125 aa). Residues 30-53 are disordered; that stretch reads AHGAAKKARAKHGERKGQDEKPRP. Basic residues predominate over residues 33–43; that stretch reads AAKKARAKHGE. The segment covering 44-53 has biased composition (basic and acidic residues); sequence RKGQDEKPRP. The stretch at 116-404 is one I repeat; that stretch reads FNLIRRTAIK…VTMAYEEQNQ (289 aa). A helical transmembrane segment spans residues 126–149; sequence VSVHAWFSIFITITILFNCVCMTQ. The Extracellular portion of the chain corresponds to 150–154; that stretch reads NDLPE. The helical transmembrane segment at 155–174 threads the bilayer; the sequence is KIEYAFTVIYTFEALIKILA. Residues 175-187 lie on the Cytoplasmic side of the membrane; that stretch reads RGFCLNEFTYLRD. Residues 188-206 form a helical membrane-spanning segment; that stretch reads PWNWLDFSVITLAYVGAAI. The Extracellular portion of the chain corresponds to 207–212; sequence DLRGIS. Residues 213–232 form a helical; Voltage-sensor membrane-spanning segment; the sequence is GLRTFRVLRALKTVSVIPGL. Residues 233–248 lie on the Cytoplasmic side of the membrane; that stretch reads KVIVGALIHSVRKLAD. A helical membrane pass occupies residues 249-272; sequence VTILTVFCLSVFALVGLQLFKGNL. Over 273–340 the chain is Extracellular; that stretch reads KNKCIKRSTD…PDFNYTSFDS (68 aa). Residues Cys-276 and Cys-318 are joined by a disulfide bond. Residues Asn-288, Asn-311, and Asn-334 are each glycosylated (N-linked (GlcNAc...) asparagine). The segment at residues 341-365 is an intramembrane region (pore-forming); it reads FAWAFLSLFRLMTQDSWERLYQQTL. Over 366-372 the chain is Extracellular; that stretch reads RASGKMY. Residues 373–398 traverse the membrane as a helical segment; the sequence is MVFFVLVIFLGSFYLVNLILAVVTMA. Residues 399 to 659 lie on the Cytoplasmic side of the membrane; the sequence is YEEQNQATIA…KWMKFKMVLF (261 aa). Phosphoserine occurs at positions 440, 443, 466, and 478. 2 disordered regions span residues 442–484 and 510–578; these read HSHN…YNQR and SQDV…ELTT. The span at 475–484 shows a compositional bias: polar residues; that stretch reads SPQSDPYNQR. Positions 523 to 533 are enriched in basic and acidic residues; that stretch reads GVFHGDHESHR. Phosphoserine occurs at positions 612 and 615. The II repeat unit spans residues 647 to 911; that stretch reads CCPKWMKFKM…EDDGEVNNLQ (265 aa). The helical transmembrane segment at 660 to 684 threads the bilayer; that stretch reads ELVTDPFAELTITLCIVVNTIFMAM. Residues 685–695 lie on the Extracellular side of the membrane; the sequence is EHYPMTDAFDA. The helical transmembrane segment at 696–719 threads the bilayer; that stretch reads MLQAGNIVFTVFFTMEMAFKIIAF. The Cytoplasmic segment spans residues 720 to 727; sequence DPYYYFQK. The chain crosses the membrane as a helical span at residues 728-747; that stretch reads KWNVFDCVIVTVSLLELSIA. The Extracellular segment spans residues 748–753; the sequence is KKGSLS. A helical; Voltage-sensor transmembrane segment spans residues 754 to 773; it reads VLRTFRLLRVFKLAKSWPTL. The Cytoplasmic portion of the chain corresponds to 774–789; it reads NTLIKIIGNSVGALGN. Residues 790 to 810 form a helical membrane-spanning segment; sequence LTFILAIIVFIFALVGKQLLG. Residues 811–834 lie on the Extracellular side of the membrane; sequence EDYGCRKDGTALWNEGQLRWHMCD. Residues 835–855 constitute an intramembrane region (pore-forming); the sequence is FFHSFLVIFRILCGEWIENMW. Topologically, residues 856–864 are extracellular; the sequence is VCMQVSEKS. Cys-857 and Cys-866 are oxidised to a cystine. A helical transmembrane segment spans residues 865–890; it reads ICLILFLTVMVLGNLVVLNLFIALLL. Topologically, residues 891-1149 are cytoplasmic; sequence NSFSADNLTA…GWQVRKTCYR (259 aa). Acidic residues predominate over residues 1004-1016; sequence GESDLDELEEDIE. 2 disordered regions span residues 1004-1034 and 1071-1097; these read GESD…QQDQ and ATPQ…PDPE. An III repeat occupies 1142 to 1451; it reads QVRKTCYRIV…KKYYNAMKKL (310 aa). The helical transmembrane segment at 1150 to 1173 threads the bilayer; it reads IVEHSWFESFIIFMILLSSGALAF. Residues 1174-1186 are Extracellular-facing; the sequence is EDNYLEQKPRVKS. A helical transmembrane segment spans residues 1187-1212; that stretch reads MLEYTDRVFTFIFVFEMLLKWVAYGF. Topologically, residues 1213–1218 are cytoplasmic; that stretch reads KKYFTN. The helical transmembrane segment at 1219–1240 threads the bilayer; that stretch reads AWCWLDFLIVNISLTSLIAKIL. Residues 1241 to 1244 lie on the Extracellular side of the membrane; the sequence is DYSD. The helical; Voltage-sensor transmembrane segment at 1245-1266 threads the bilayer; that stretch reads VASLKALRTLRALRPLRALSRF. Topologically, residues 1267–1285 are cytoplasmic; the sequence is EGMRVVVDALVGAIPSIMN. A helical transmembrane segment spans residues 1286–1313; it reads VLLVCLIFWLIFSIMGVNLFAGKFSRCI. Over 1314–1355 the chain is Extracellular; it reads DTSNNPFSVVNSTIVNNKSECRNQNHTGHFFWVNVKVNFDNV. The pore-forming intramembrane region spans 1356-1377; that stretch reads AMGYLALLQVATFKGWMDIMYA. The Extracellular portion of the chain corresponds to 1378–1393; that stretch reads AVDSREINSQPQWEDN. The helical transmembrane segment at 1394–1420 threads the bilayer; that stretch reads LYMYLYFVVFIIFGGFFTLNLFVGVII. The Cytoplasmic segment spans residues 1421–1473; sequence DNFNQQKKKLGGQDIFMTEEQKKYYNAMKKLGSKKPQKPIPRPLNKYQGFVFD. Ser-1453 is subject to Phosphoserine; by PKC. Residues 1460–1759 form an IV repeat; sequence IPRPLNKYQG…WEKFDPEATQ (300 aa). Residues 1474–1497 traverse the membrane as a helical segment; sequence IVTRQAFDIIIMVLICLNMITMMV. Over 1498–1508 the chain is Extracellular; the sequence is ETDGQSEEKTK. The helical transmembrane segment at 1509 to 1532 threads the bilayer; it reads ILGRINQFFVAVFTGECVMKMFAL. The Cytoplasmic portion of the chain corresponds to 1533 to 1538; the sequence is RQYYFT. A helical membrane pass occupies residues 1539 to 1562; the sequence is NGWNVFDFIVVILSIGSLVFSAIL. Residues 1563 to 1574 are Extracellular-facing; that stretch reads KSLESYFSPTLF. Residues 1575–1596 form a helical; Voltage-sensor membrane-spanning segment; that stretch reads RVIRLARIGRILRLIRAAKGIR. Residues 1597-1611 are Cytoplasmic-facing; it reads TLLFALMMSLPALFN. The helical transmembrane segment at 1612 to 1634 threads the bilayer; sequence IGLLLFLVMFIYSIFGMASFANV. Residues 1635 to 1648 lie on the Extracellular side of the membrane; sequence VEEAGIDDMFNFQT. Positions 1649–1671 form an intramembrane region, pore-forming; that stretch reads FGNSMLCLFQITTSAGWDGLLSP. The Extracellular portion of the chain corresponds to 1672–1699; the sequence is ILNTGPPYCDPNLSNNNTSKGNCGSPTV. Residues 1700–1724 traverse the membrane as a helical segment; the sequence is GIVFFTTYIIISFLIVVNMYIAVIL. The Cytoplasmic portion of the chain corresponds to 1725–1959; that stretch reads ENFNVATEES…SKEGDSPGPQ (235 aa). An IQ domain is found at 1853 to 1882; that stretch reads EDISATVIQKAYRSYVLQRSLTLSNPLRVP. Residues 1901–1959 form a disordered region; the sequence is ANDSGRLPDKSETTSATSFPPSYDSVTRGLSDRVNISTSNSMHNEDEVTSKEGDSPGPQ. A compositionally biased stretch (basic and acidic residues) spans 1943-1959; sequence HNEDEVTSKEGDSPGPQ.

This sequence belongs to the sodium channel (TC 1.A.1.10) family. Nav1.8/SCN10A subfamily. The channel consists of an ion conducting pore forming alpha-subunit regulated by one or more associated auxiliary subunits SCN1B, SCN2B and SCN3B; electrophysiological properties may vary depending on the type of the associated beta subunits. Found in a number of complexes with PRX, DYNLT1 and PDZD2. Interacts with proteins such as FSTL1, PRX, DYNLT1, PDZD2, S100A10 and many others. Interacts with NEDD4 and NEDD4L. Post-translationally, ubiquitinated by NEDD4L; which promotes its endocytosis. In terms of processing, phosphorylation at Ser-1453 by PKC in a highly conserved cytoplasmic loop slows inactivation of the sodium channel and reduces peak sodium currents. Lacks the cysteine which covalently binds the conotoxin GVIIJ. This cysteine (position 816) is speculated in other sodium channel subunits alpha to be implied in covalent binding with the sodium channel subunit beta-2 or beta-4.

It localises to the cell membrane. The enzyme catalyses Na(+)(in) = Na(+)(out). In terms of biological role, tetrodotoxin-resistant channel that mediates the voltage-dependent sodium ion permeability of excitable membranes. Assuming opened or closed conformations in response to the voltage difference across the membrane, the protein forms a sodium-selective channel through which sodium ions may pass in accordance with their electrochemical gradient. Plays a role in neuropathic pain mechanisms. The sequence is that of Sodium channel protein type 10 subunit alpha (Scn10a) from Onychomys torridus (Southern grasshopper mouse).